The primary structure comprises 147 residues: 3-hydroxyacyl-[acyl-carrier-protein] dehydratase FabZ (147 aa).

H46 is an active-site residue.

It belongs to the thioester dehydratase family. FabZ subfamily.

The protein localises to the cytoplasm. It carries out the reaction a (3R)-hydroxyacyl-[ACP] = a (2E)-enoyl-[ACP] + H2O. Its function is as follows. Involved in unsaturated fatty acids biosynthesis. Catalyzes the dehydration of short chain beta-hydroxyacyl-ACPs and long chain saturated and unsaturated beta-hydroxyacyl-ACPs. This chain is 3-hydroxyacyl-[acyl-carrier-protein] dehydratase FabZ, found in Syntrophobacter fumaroxidans (strain DSM 10017 / MPOB).